A 276-amino-acid polypeptide reads, in one-letter code: Large ribosomal subunit protein uL2 (276 aa).

Disordered stretches follow at residues 33–55 (LVEA…RHIG) and 221–276 (RGTA…AKKK).

This sequence belongs to the universal ribosomal protein uL2 family. As to quaternary structure, part of the 50S ribosomal subunit. Forms a bridge to the 30S subunit in the 70S ribosome.

Its function is as follows. One of the primary rRNA binding proteins. Required for association of the 30S and 50S subunits to form the 70S ribosome, for tRNA binding and peptide bond formation. It has been suggested to have peptidyltransferase activity; this is somewhat controversial. Makes several contacts with the 16S rRNA in the 70S ribosome. The protein is Large ribosomal subunit protein uL2 of Psychrobacter sp. (strain PRwf-1).